The chain runs to 347 residues: Probable dual-specificity RNA methyltransferase RlmN (347 aa).

The Proton acceptor role is filled by Glu-90. One can recognise a Radical SAM core domain in the interval 96–326 (YKHGNSICIS…VTVRREMGSD (231 aa)). Cys-103 and Cys-331 are joined by a disulfide. Residues Cys-110, Cys-114, and Cys-117 each coordinate [4Fe-4S] cluster. Residues 157 to 158 (GE), Ser-189, 212 to 214 (SLH), and Asn-288 each bind S-adenosyl-L-methionine. Catalysis depends on Cys-331, which acts as the S-methylcysteine intermediate.

Belongs to the radical SAM superfamily. RlmN family. It depends on [4Fe-4S] cluster as a cofactor.

Its subcellular location is the cytoplasm. It catalyses the reaction adenosine(2503) in 23S rRNA + 2 reduced [2Fe-2S]-[ferredoxin] + 2 S-adenosyl-L-methionine = 2-methyladenosine(2503) in 23S rRNA + 5'-deoxyadenosine + L-methionine + 2 oxidized [2Fe-2S]-[ferredoxin] + S-adenosyl-L-homocysteine. The catalysed reaction is adenosine(37) in tRNA + 2 reduced [2Fe-2S]-[ferredoxin] + 2 S-adenosyl-L-methionine = 2-methyladenosine(37) in tRNA + 5'-deoxyadenosine + L-methionine + 2 oxidized [2Fe-2S]-[ferredoxin] + S-adenosyl-L-homocysteine. Its function is as follows. Specifically methylates position 2 of adenine 2503 in 23S rRNA and position 2 of adenine 37 in tRNAs. The polypeptide is Probable dual-specificity RNA methyltransferase RlmN (Clostridium botulinum (strain Alaska E43 / Type E3)).